The chain runs to 98 residues: Large ribosomal subunit protein uL23 (98 aa).

It belongs to the universal ribosomal protein uL23 family. Part of the 50S ribosomal subunit. Contacts protein L29, and trigger factor when it is bound to the ribosome.

Its function is as follows. One of the early assembly proteins it binds 23S rRNA. One of the proteins that surrounds the polypeptide exit tunnel on the outside of the ribosome. Forms the main docking site for trigger factor binding to the ribosome. This is Large ribosomal subunit protein uL23 from Teredinibacter turnerae (strain ATCC 39867 / T7901).